Consider the following 311-residue polypeptide: Aspartate carbamoyltransferase catalytic subunit (311 aa).

Residues arginine 55 and threonine 56 each contribute to the carbamoyl phosphate site. Lysine 85 contributes to the L-aspartate binding site. Residues arginine 106, histidine 135, and glutamine 138 each coordinate carbamoyl phosphate. Residues arginine 168 and arginine 230 each contribute to the L-aspartate site. Residues leucine 268 and proline 269 each coordinate carbamoyl phosphate.

It belongs to the aspartate/ornithine carbamoyltransferase superfamily. ATCase family. Heterododecamer (2C3:3R2) of six catalytic PyrB chains organized as two trimers (C3), and six regulatory PyrI chains organized as three dimers (R2).

It carries out the reaction carbamoyl phosphate + L-aspartate = N-carbamoyl-L-aspartate + phosphate + H(+). Its pathway is pyrimidine metabolism; UMP biosynthesis via de novo pathway; (S)-dihydroorotate from bicarbonate: step 2/3. In terms of biological role, catalyzes the condensation of carbamoyl phosphate and aspartate to form carbamoyl aspartate and inorganic phosphate, the committed step in the de novo pyrimidine nucleotide biosynthesis pathway. In Salmonella paratyphi C (strain RKS4594), this protein is Aspartate carbamoyltransferase catalytic subunit.